A 303-amino-acid chain; its full sequence is Glycine--tRNA ligase alpha subunit (303 aa).

It belongs to the class-II aminoacyl-tRNA synthetase family. In terms of assembly, tetramer of two alpha and two beta subunits.

The protein localises to the cytoplasm. It carries out the reaction tRNA(Gly) + glycine + ATP = glycyl-tRNA(Gly) + AMP + diphosphate. The polypeptide is Glycine--tRNA ligase alpha subunit (Bordetella pertussis (strain Tohama I / ATCC BAA-589 / NCTC 13251)).